Reading from the N-terminus, the 300-residue chain is MEELLSKQREECKELQSKITNLRKQLKEGNKKQKRALQQKISQMEADLSQKHATERQKLDKGDEETNETQQEDLLNTLLQQMEDTKITTAEKSSVQSSLNTKENTPQQPKKSRNRQKERLERRKAEMKKMSEQAELESEKMADLKNEEKKKFSKILEEAGLVAVDIPADGNCLFASISHQLNYHHNVKLNSQALRNKSADYVLKHCEQFEGFLLDEESGEVLPVSDYCNEIRNNSKWGSDIEIQALANSLEVPVHVYNTEGPVLKFNPSTVKFEKPLCIAYYQHLFGLGAHYNSLLYRDN.

2 disordered regions span residues 23–73 and 89–141; these read RKQL…QQED and TAEK…SEKM. Basic and acidic residues predominate over residues 48 to 61; it reads LSQKHATERQKLDK. Over residues 62–71 the composition is skewed to acidic residues; that stretch reads GDEETNETQQ. A compositionally biased stretch (polar residues) spans 89–109; that stretch reads TAEKSSVQSSLNTKENTPQQP. The segment covering 115–141 has biased composition (basic and acidic residues); sequence RQKERLERRKAEMKKMSEQAELESEKM. The 138-residue stretch at 161–298 folds into the OTU domain; the sequence is LVAVDIPADG…GAHYNSLLYR (138 aa).

It is found in the cytoplasm. The catalysed reaction is Thiol-dependent hydrolysis of ester, thioester, amide, peptide and isopeptide bonds formed by the C-terminal Gly of ubiquitin (a 76-residue protein attached to proteins as an intracellular targeting signal).. Its function is as follows. Hydrolase that can remove conjugated ubiquitin from proteins and may therefore play an important regulatory role at the level of protein turnover by preventing degradation. The sequence is that of Ubiquitin thioesterase otu2 (otu2) from Schizosaccharomyces pombe (strain 972 / ATCC 24843) (Fission yeast).